Reading from the N-terminus, the 312-residue chain is MSGIDPKRFGKVAVLLGGDSAEREVSLNSGRLVLQGLRDAGIDAHPFDPAQRPLAALKDEGFVRAFNALHGGYGENGQIQGALDFYGIRYTGSGVLGSALGLDKFRTKLVWQQTGIPTPPFETVMRGDDYAARAQDIAAKLGVPLFVKPASEGSSVAVEKVKSADALPAALEEAAKHDKIVIVEKSIEGGGEYTACIAADLDLPLIRIVPAGEFYDYHAKYIANDTQYLIPCGLDAAKEAEFKRIARRAFDVLGCTDWGRADFMLDAAGNPYFLEVNTAPGMTDHSLPPKAARAVGIGYSELVVKVLSLTLD.

An ATP-grasp domain is found at 108-308 (KLVWQQTGIP…YSELVVKVLS (201 aa)). Residue 138-193 (AAKLGVPLFVKPASEGSSVAVEKVKSADALPAALEEAAKHDKIVIVEKSIEGGGEY) participates in ATP binding. Asp262, Glu275, and Asn277 together coordinate Mg(2+).

The protein belongs to the D-alanine--D-alanine ligase family. Requires Mg(2+) as cofactor. The cofactor is Mn(2+).

It is found in the cytoplasm. The enzyme catalyses 2 D-alanine + ATP = D-alanyl-D-alanine + ADP + phosphate + H(+). Its pathway is cell wall biogenesis; peptidoglycan biosynthesis. Its function is as follows. Cell wall formation. The protein is D-alanine--D-alanine ligase of Burkholderia pseudomallei (strain 668).